The following is a 339-amino-acid chain: Biotin synthase (339 aa).

The region spanning 55–282 (NAVQLSTLLS…KAVVRLSAGR (228 aa)) is the Radical SAM core domain. 3 residues coordinate [4Fe-4S] cluster: Cys70, Cys74, and Cys77. 4 residues coordinate [2Fe-2S] cluster: Cys114, Cys145, Cys205, and Arg277.

It belongs to the radical SAM superfamily. Biotin synthase family. In terms of assembly, homodimer. The cofactor is [4Fe-4S] cluster. [2Fe-2S] cluster serves as cofactor.

The enzyme catalyses (4R,5S)-dethiobiotin + (sulfur carrier)-SH + 2 reduced [2Fe-2S]-[ferredoxin] + 2 S-adenosyl-L-methionine = (sulfur carrier)-H + biotin + 2 5'-deoxyadenosine + 2 L-methionine + 2 oxidized [2Fe-2S]-[ferredoxin]. It functions in the pathway cofactor biosynthesis; biotin biosynthesis; biotin from 7,8-diaminononanoate: step 2/2. Functionally, catalyzes the conversion of dethiobiotin (DTB) to biotin by the insertion of a sulfur atom into dethiobiotin via a radical-based mechanism. This chain is Biotin synthase, found in Burkholderia ambifaria (strain MC40-6).